The following is a 250-amino-acid chain: Ubiquinone/menaquinone biosynthesis C-methyltransferase UbiE (250 aa).

S-adenosyl-L-methionine contacts are provided by residues T74, D94, 122–123, and S139; that span reads DA.

The protein belongs to the class I-like SAM-binding methyltransferase superfamily. MenG/UbiE family.

It catalyses the reaction a 2-demethylmenaquinol + S-adenosyl-L-methionine = a menaquinol + S-adenosyl-L-homocysteine + H(+). The enzyme catalyses a 2-methoxy-6-(all-trans-polyprenyl)benzene-1,4-diol + S-adenosyl-L-methionine = a 5-methoxy-2-methyl-3-(all-trans-polyprenyl)benzene-1,4-diol + S-adenosyl-L-homocysteine + H(+). It participates in quinol/quinone metabolism; menaquinone biosynthesis; menaquinol from 1,4-dihydroxy-2-naphthoate: step 2/2. It functions in the pathway cofactor biosynthesis; ubiquinone biosynthesis. Functionally, methyltransferase required for the conversion of demethylmenaquinol (DMKH2) to menaquinol (MKH2) and the conversion of 2-polyprenyl-6-methoxy-1,4-benzoquinol (DDMQH2) to 2-polyprenyl-3-methyl-6-methoxy-1,4-benzoquinol (DMQH2). This Ruegeria sp. (strain TM1040) (Silicibacter sp.) protein is Ubiquinone/menaquinone biosynthesis C-methyltransferase UbiE.